The chain runs to 352 residues: Phosphoribosylformylglycinamidine cyclo-ligase (352 aa).

Belongs to the AIR synthase family.

Its subcellular location is the cytoplasm. The enzyme catalyses 2-formamido-N(1)-(5-O-phospho-beta-D-ribosyl)acetamidine + ATP = 5-amino-1-(5-phospho-beta-D-ribosyl)imidazole + ADP + phosphate + H(+). Its pathway is purine metabolism; IMP biosynthesis via de novo pathway; 5-amino-1-(5-phospho-D-ribosyl)imidazole from N(2)-formyl-N(1)-(5-phospho-D-ribosyl)glycinamide: step 2/2. The chain is Phosphoribosylformylglycinamidine cyclo-ligase from Pseudomonas putida (strain GB-1).